Consider the following 128-residue polypeptide: Cholecystokinin B (128 aa).

An N-terminal signal peptide occupies residues 1–20 (MCSGVCICLLLAMLSASSKA). A propeptide spanning residues 21–108 (HQATGSLGED…FDQSHRINDR (88 aa)) is cleaved from the precursor. Residues 47–67 (YARASSAGQKKSFQRTDGDQR) form a disordered region. Tyr-110 bears the Sulfotyrosine mark. Phe-116 bears the Phenylalanine amide mark. A propeptide spanning residues 120-128 (SAEEYEYSS) is cleaved from the precursor.

The protein belongs to the gastrin/cholecystokinin family. In terms of processing, the precursor is cleaved by proteases to produce a number of active cholecystokinins. As to expression, brain and gastrointestinal tract.

It is found in the secreted. The chain is Cholecystokinin B (cck-b) from Xenopus laevis (African clawed frog).